The chain runs to 708 residues: Leukotoxin translocation ATP-binding protein LktB (708 aa).

The Peptidase C39 domain occupies 1–126 (MEVNHQSNDL…SCYQGKIILV (126 aa)). The region spanning 155–437 (FLETLLVSIF…LAQLWQDFTQ (283 aa)) is the ABC transmembrane type-1 domain. 5 helical membrane passes run 159-179 (LLVS…FQVV), 192-212 (LNII…LSGL), 270-290 (ALTS…MWYY), 296-316 (LVIL…SPIL), and 389-409 (VMVI…LSIG). The region spanning 469–704 (IAFKNIRFRY…NNGLYSYLHQ (236 aa)) is the ABC transporter domain. 503 to 510 (GRSGSGKS) lines the ATP pocket.

It belongs to the ABC transporter superfamily. Protein-1 exporter (TC 3.A.1.109) family. Homodimer.

The protein resides in the cell inner membrane. It carries out the reaction ATP + H2O + proteinSide 1 = ADP + phosphate + proteinSide 2.. Its function is as follows. Part of the ABC transporter complex LktBD involved in leukotoxin export. Transmembrane domains (TMD) form a pore in the inner membrane and the ATP-binding domain (NBD) is responsible for energy generation. This Pasteurella haemolytica-like sp. (strain 5943B) protein is Leukotoxin translocation ATP-binding protein LktB (lktB).